A 92-amino-acid polypeptide reads, in one-letter code: Large ribosomal subunit protein bL25 (92 aa).

The protein belongs to the bacterial ribosomal protein bL25 family. In terms of assembly, part of the 50S ribosomal subunit; part of the 5S rRNA/L5/L18/L25 subcomplex. Contacts the 5S rRNA. Binds to the 5S rRNA independently of L5 and L18.

Functionally, this is one of the proteins that binds to the 5S RNA in the ribosome where it forms part of the central protuberance. The sequence is that of Large ribosomal subunit protein bL25 from Photobacterium profundum (strain SS9).